Here is a 666-residue protein sequence, read N- to C-terminus: Protein-arginine deiminase type-4 (666 aa).

Ca(2+) contacts are provided by Asn153, Asp155, Asp165, Asp168, Asp176, and Asp179. Arg212 and Arg218 each carry citrulline. Residue Gln349 coordinates Ca(2+). Residue Asp350 is part of the active site. Positions 351, 353, 369, and 370 each coordinate Ca(2+). Residues Arg372, Arg374, and Arg383 each carry the citrulline modification. Position 374 (Arg374) interacts with substrate. Ca(2+) contacts are provided by Phe407, Leu410, and Glu411. Catalysis depends on residues His471, Asp473, and Cys648.

It belongs to the protein arginine deiminase family. Ca(2+) serves as cofactor. Autocitrullination at Arg-372 and Arg-374 inactivates the enzyme. Expressed in pluripotent embryonic stem and induced pluripotent stem cells but not multipotent neural stem cells.

Its subcellular location is the cytoplasm. It is found in the nucleus. It localises to the cytoplasmic granule. The enzyme catalyses L-arginyl-[protein] + H2O = L-citrullyl-[protein] + NH4(+). With respect to regulation, strongly Inhibited by F-amidine and N-alpha-benzoyl-N5-(2-chloro-1-iminoethyl)-L-ornithine amide (Cl-amidine). These inhibitors are however not specific to PADI4 and also inhibit other members of the family. Its function is as follows. Catalyzes the citrullination/deimination of arginine residues of proteins such as histones, thereby playing a key role in histone code and regulation of stem cell maintenance. Citrullinates histone H1 at 'Arg-54' (to form H1R54ci), histone H3 at 'Arg-2', 'Arg-8', 'Arg-17' and/or 'Arg-26' (to form H3R2ci, H3R8ci, H3R17ci, H3R26ci, respectively) and histone H4 at 'Arg-3' (to form H4R3ci). Acts as a key regulator of stem cell maintenance by mediating citrullination of histone H1: citrullination of 'Arg-54' of histone H1 (H1R54ci) results in H1 displacement from chromatin and global chromatin decondensation, thereby promoting pluripotency and stem cell maintenance. Promotes profound chromatin decondensation during the innate immune response to infection in neutrophils by mediating formation of H1R54ci. Required for the formation of neutrophil extracellular traps (NETs); NETs are mainly composed of DNA fibers and are released by neutrophils to bind pathogens during inflammation. Citrullination of histone H3 prevents their methylation by CARM1 and HRMT1L2/PRMT1 and represses transcription. Citrullinates EP300/P300 at 'Arg-2142', which favors its interaction with NCOA2/GRIP1. This chain is Protein-arginine deiminase type-4 (Padi4), found in Mus musculus (Mouse).